The sequence spans 1256 residues: Muramidase-released protein (1256 aa).

The signal sequence occupies residues 1–47; sequence MRRSNKKSFDWYGTKQQFSIRKYHFGAASVLLGVSLVLGAGAQVVKA. Small repeat units follow at residues 663–681 and 839–861; these read KTTG…VYEK and KTDG…VYQK. Disordered stretches follow at residues 873–949, 967–994, and 1028–1049; these read PETD…VDTP, GNPI…KTVT, and KEPV…TDNK. The Large repeat unit spans residues 953 to 1006; sequence VPVKKVVTNHVDEEGNPIAPQEEGTKPNKSIPGYEFTGKTVTDEDGNTTHIYKK. Positions 1033 to 1045 are enriched in polar residues; it reads DTPTSPEGTPYDT. A Small repeat occupies 1064–1084; sequence RVDGTENGKVVEGETVVTYVY. Large repeat units follow at residues 1089 to 1142 and 1143 to 1195; these read TPAK…IYKK and TPAK…IYRK. The interval 1102–1137 is disordered; the sequence is EGNPVAPQEEGTKPNKSIPGYEFTGKTVTDEDGNTT. Residues 1196–1229 are disordered; sequence LSNKPTTPEKETPAKPQAGKTASGKAQLPNTGEA. Positions 1223–1227 match the LPXTG sorting signal motif; that stretch reads LPNTG. Position 1226 is a pentaglycyl murein peptidoglycan amidated threonine (T1226). Positions 1227 to 1256 are cleaved as a propeptide — removed by sortase; that stretch reads GEASSVAGALGTAMLVATLAFARKRRRNED.

It is found in the secreted. It localises to the cell wall. In Streptococcus suis, this protein is Muramidase-released protein (mrp).